Reading from the N-terminus, the 145-residue chain is Small ribosomal subunit protein eS19 (145 aa).

K23 bears the N6-acetyllysine mark. Residue R67 is modified to Omega-N-methylarginine. Residues K111 and K115 each carry the N6-acetyllysine modification. At K143 the chain carries N6-succinyllysine.

The protein belongs to the eukaryotic ribosomal protein eS19 family. In terms of assembly, component of the small ribosomal subunit. Part of the small subunit (SSU) processome, composed of more than 70 proteins and the RNA chaperone small nucleolar RNA (snoRNA) U3. Interacts with RPS19BP1; the interaction is direct and mediates the integration of RPS19 in state post-A1. Interacts with RPS19BP1.

The protein localises to the cytoplasm. It is found in the nucleus. It localises to the nucleolus. In terms of biological role, component of the small ribosomal subunit. The ribosome is a large ribonucleoprotein complex responsible for the synthesis of proteins in the cell. Required for pre-rRNA processing and maturation of 40S ribosomal subunits. Part of the small subunit (SSU) processome, first precursor of the small eukaryotic ribosomal subunit. During the assembly of the SSU processome in the nucleolus, many ribosome biogenesis factors, an RNA chaperone and ribosomal proteins associate with the nascent pre-rRNA and work in concert to generate RNA folding, modifications, rearrangements and cleavage as well as targeted degradation of pre-ribosomal RNA by the RNA exosome. The sequence is that of Small ribosomal subunit protein eS19 (RPS19) from Oryctolagus cuniculus (Rabbit).